We begin with the raw amino-acid sequence, 282 residues long: Undecaprenyl-diphosphatase (282 aa).

Transmembrane regions (helical) follow at residues 40–60, 87–107, 116–136, 153–173, 196–216, 229–249, and 256–276; these read GAAFSAIVQIGTLAAVLIYFY, MGWMIAAGTMPIVILGLLFKT, LYWISVALIVLALMLTLAEWL, IGWKEALLIGLAQSIALIPGS, FSFLLSLPAVFAAGIYQLYET, NLAVATLFAGIVGYASIAFLI, and STALFILYRIALGVGILGLIA.

The protein belongs to the UppP family.

It is found in the cell inner membrane. The catalysed reaction is di-trans,octa-cis-undecaprenyl diphosphate + H2O = di-trans,octa-cis-undecaprenyl phosphate + phosphate + H(+). Its function is as follows. Catalyzes the dephosphorylation of undecaprenyl diphosphate (UPP). Confers resistance to bacitracin. The protein is Undecaprenyl-diphosphatase of Chlorobium phaeobacteroides (strain BS1).